Here is an 83-residue protein sequence, read N- to C-terminus: Cytotoxin A5 (83 aa).

Positions 1–21 are cleaved as a signal peptide; it reads MKTLLLTMVVVTIVCLDLGYT. 4 disulfides stabilise this stretch: cysteine 24–cysteine 43, cysteine 36–cysteine 61, cysteine 65–cysteine 76, and cysteine 77–cysteine 82.

The protein belongs to the three-finger toxin family. Short-chain subfamily. Orphan group XV sub-subfamily. In terms of tissue distribution, expressed by the venom gland.

Its subcellular location is the secreted. The protein localises to the target cell membrane. Its function is as follows. Non-cytotoxic protein that does not show lytic and hemolytic activities, but can induce aggregation and fusion of sphingomyelin vesicles. It binds to integrin alpha-V/beta-3 (ITGAV/ITGB3) with high affinity, and it inhibits osteoclast differentiation and bone resorption in mice, probably due to binding to integrin alpha-V/beta-3. In Naja atra (Chinese cobra), this protein is Cytotoxin A5.